The primary structure comprises 347 residues: uncharacterized protein (347 aa).

2 coiled-coil regions span residues 148–201 (DQQS…EKDG) and 261–298 (LENLTFRLNLINDLNKKEEEKEKEKEKEKEENSFDTFS). A disordered region spans residues 151-203 (SISNLRKEEKEKQKENENENENENENENENEKENQELDKKVNQTNDNEKDGDE). Positions 155–167 (LRKEEKEKQKENE) are enriched in basic and acidic residues. Residues 168 to 178 (NENENENENEN) show a composition bias toward acidic residues. Positions 179–191 (ENEKENQELDKKV) are enriched in basic and acidic residues.

This is an uncharacterized protein from Dictyostelium discoideum (Social amoeba).